Here is an 81-residue protein sequence, read N- to C-terminus: Photosystem I iron-sulfur center (81 aa).

2 consecutive 4Fe-4S ferredoxin-type domains span residues 2-31 (SHSV…MIPW) and 39-68 (IASA…VRVY). [4Fe-4S] cluster contacts are provided by Cys11, Cys14, Cys17, Cys21, Cys48, Cys51, Cys54, and Cys58.

As to quaternary structure, the eukaryotic PSI reaction center is composed of at least 11 subunits. Requires [4Fe-4S] cluster as cofactor.

The protein resides in the plastid. It is found in the chloroplast thylakoid membrane. The enzyme catalyses reduced [plastocyanin] + hnu + oxidized [2Fe-2S]-[ferredoxin] = oxidized [plastocyanin] + reduced [2Fe-2S]-[ferredoxin]. In terms of biological role, apoprotein for the two 4Fe-4S centers FA and FB of photosystem I (PSI); essential for photochemical activity. FB is the terminal electron acceptor of PSI, donating electrons to ferredoxin. The C-terminus interacts with PsaA/B/D and helps assemble the protein into the PSI complex. Required for binding of PsaD and PsaE to PSI. PSI is a plastocyanin-ferredoxin oxidoreductase, converting photonic excitation into a charge separation, which transfers an electron from the donor P700 chlorophyll pair to the spectroscopically characterized acceptors A0, A1, FX, FA and FB in turn. This Acorus calamus (Sweet flag) protein is Photosystem I iron-sulfur center.